The following is a 465-amino-acid chain: Light-independent protochlorophyllide reductase subunit N (465 aa).

The [4Fe-4S] cluster site is built by C23, C48, and C108.

Belongs to the BchN/ChlN family. In terms of assembly, protochlorophyllide reductase is composed of three subunits; ChlL, ChlN and ChlB. Forms a heterotetramer of two ChlB and two ChlN subunits. [4Fe-4S] cluster is required as a cofactor.

It catalyses the reaction chlorophyllide a + oxidized 2[4Fe-4S]-[ferredoxin] + 2 ADP + 2 phosphate = protochlorophyllide a + reduced 2[4Fe-4S]-[ferredoxin] + 2 ATP + 2 H2O. The protein operates within porphyrin-containing compound metabolism; chlorophyll biosynthesis (light-independent). In terms of biological role, component of the dark-operative protochlorophyllide reductase (DPOR) that uses Mg-ATP and reduced ferredoxin to reduce ring D of protochlorophyllide (Pchlide) to form chlorophyllide a (Chlide). This reaction is light-independent. The NB-protein (ChlN-ChlB) is the catalytic component of the complex. The polypeptide is Light-independent protochlorophyllide reductase subunit N (Trichodesmium erythraeum (strain IMS101)).